Here is a 430-residue protein sequence, read N- to C-terminus: MLGSSAHGPAAREAGSAVTLQQTAFQEDQENVNPEKAAPAQQPRTRAGLAVLRAGNSRGPAPQRPKTRRVAPLKDLPINDEYVPVPPWKANNKQPAFTIHVDEAEEEIQKRPTESKKSESEDVLAFNSAVTLPGPRKPLAPLDYPMDGSFESPHTMEMSVVLEDEKPVSVNEVPDYHEDIHTYLREMEVKCKPKVGYMKKQPDITNSMRAILVDWLVEVGEEYKLQNETLHLAVNYIDRFLSSMSVLRGKLQLVGTAAMLLASKFEEIYPPEVAEFVYITDDTYTKKQVLRMEHLVLKVLAFDLAAPTINQFLTQYFLHQQPANCKVESLAMFLGELSLIDADPYLKYLPSVIAAAAFHLALYTVTGQSWPESLVQKTGYTLETLKPCLLDLHQTYLRAPQHAQQSIREKYKNSKYHGVSLLNPPETLNV.

Met-1 bears the N-acetylmethionine mark. Disordered regions lie at residues 1–80 (MLGS…PIND) and 106–129 (EEIQ…FNSA). At Ser-5 the chain carries Phosphoserine. Basic and acidic residues predominate over residues 107–120 (EIQKRPTESKKSES).

Belongs to the cyclin family. Cyclin AB subfamily. As to quaternary structure, interacts with the CDK1 and CDK2 protein kinases to form serine/threonine kinase holoenzyme complexes. Interacts with CDK1 (hyperphosphorylated form in G1 and underphosphorylated forms in S and G2). Interacts with CDK2; the interaction increases from G1 to G2. Interacts (associated with CDK2 but not with CDK1) with SCAPER; regulates the activity of CCNA2/CDK2 by transiently maintaining CCNA2 in the cytoplasm. Forms a ternary complex with CDK2 and CDKN1B; CDKN1B inhibits the kinase activity of CDK2 through conformational rearrangements. Interacts with INCA1. Polyubiquitinated via 'Lys-11'-linked ubiquitin by the anaphase-promoting complex (APC/C), leading to its degradation by the proteasome. Deubiquitinated and stabilized by USP37 enables entry into S phase. Ubiquitinated during the G1 phase by the SCF(FBXO31) complex, leading to its proteasomal degradation.

The protein localises to the nucleus. It is found in the cytoplasm. Functionally, cyclin which controls both the G1/S and the G2/M transition phases of the cell cycle. Functions through the formation of specific serine/threonine kinase holoenzyme complexes with the cyclin-dependent protein kinases CDK1 and CDK2. The cyclin subunit confers the substrate specificity of these complexes and differentially interacts with and activates CDK1 and CDK2 throughout the cell cycle. In Bos taurus (Bovine), this protein is Cyclin-A2.